A 73-amino-acid polypeptide reads, in one-letter code: MNLETPSQENVNFMLTEITTKLKMVNVGVFENLELDSVDYNALIDIYQLIKRKSNFSPREMQLFAEELRRIRK.

This sequence belongs to the UPF0435 family.

The protein is UPF0435 protein lwe1727 of Listeria welshimeri serovar 6b (strain ATCC 35897 / DSM 20650 / CCUG 15529 / CIP 8149 / NCTC 11857 / SLCC 5334 / V8).